Reading from the N-terminus, the 1059-residue chain is Carbamoyl phosphate synthase large chain (1059 aa).

Residues 1–401 (MPKRKDIQKI…SLLKACRSLE (401 aa)) are carboxyphosphate synthetic domain. ATP-binding residues include R129, R169, G175, G176, R208, I210, E215, G241, I242, H243, Q284, and E298. In terms of domain architecture, ATP-grasp 1 spans 133–327 (KQLMEELGQP…IAKLAAKIAV (195 aa)). Positions 284, 298, and 300 each coordinate Mg(2+). The Mn(2+) site is built by Q284, E298, and N300. Residues 402-546 (VCVDHNELPA…YSTYGFENES (145 aa)) are oligomerization domain. Positions 547–929 (VKSSKESVLV…ALYKAFEASY (383 aa)) are carbamoyl phosphate synthetic domain. The ATP-grasp 2 domain maps to 671–861 (EQALKELDIP…MAQVATRLIL (191 aa)). Residues R707, S746, I748, E752, G777, V778, H779, S780, Q820, and E832 each contribute to the ATP site. Mg(2+) contacts are provided by Q820, E832, and N834. The Mn(2+) site is built by Q820, E832, and N834. Residues 930–1059 (LHLPNFGNIV…ESRSFTTEAI (130 aa)) enclose the MGS-like domain. The allosteric domain stretch occupies residues 930–1059 (LHLPNFGNIV…ESRSFTTEAI (130 aa)).

It belongs to the CarB family. Composed of two chains; the small (or glutamine) chain promotes the hydrolysis of glutamine to ammonia, which is used by the large (or ammonia) chain to synthesize carbamoyl phosphate. Tetramer of heterodimers (alpha,beta)4. Requires Mg(2+) as cofactor. The cofactor is Mn(2+).

It carries out the reaction hydrogencarbonate + L-glutamine + 2 ATP + H2O = carbamoyl phosphate + L-glutamate + 2 ADP + phosphate + 2 H(+). It catalyses the reaction hydrogencarbonate + NH4(+) + 2 ATP = carbamoyl phosphate + 2 ADP + phosphate + 2 H(+). Its pathway is amino-acid biosynthesis; L-arginine biosynthesis; carbamoyl phosphate from bicarbonate: step 1/1. The protein operates within pyrimidine metabolism; UMP biosynthesis via de novo pathway; (S)-dihydroorotate from bicarbonate: step 1/3. In terms of biological role, large subunit of the glutamine-dependent carbamoyl phosphate synthetase (CPSase). CPSase catalyzes the formation of carbamoyl phosphate from the ammonia moiety of glutamine, carbonate, and phosphate donated by ATP, constituting the first step of 2 biosynthetic pathways, one leading to arginine and/or urea and the other to pyrimidine nucleotides. The large subunit (synthetase) binds the substrates ammonia (free or transferred from glutamine from the small subunit), hydrogencarbonate and ATP and carries out an ATP-coupled ligase reaction, activating hydrogencarbonate by forming carboxy phosphate which reacts with ammonia to form carbamoyl phosphate. The sequence is that of Carbamoyl phosphate synthase large chain from Streptococcus sanguinis (strain SK36).